We begin with the raw amino-acid sequence, 132 residues long: UPF0292 protein PH1700 (132 aa).

Residues 20–100 (EGAIIVEGAR…KVDTETRREL (81 aa)) enclose the Toprim domain. Mg(2+) is bound by residues glutamate 26, aspartate 69, and aspartate 71.

Belongs to the UPF0292 family. Requires Mg(2+) as cofactor.

The sequence is that of UPF0292 protein PH1700 from Pyrococcus horikoshii (strain ATCC 700860 / DSM 12428 / JCM 9974 / NBRC 100139 / OT-3).